The sequence spans 321 residues: Gap junction delta-2 protein (321 aa).

Over 1-19 the chain is Cytoplasmic; the sequence is MGEWTILERLLEAAVQQHS. A helical membrane pass occupies residues 20–42; that stretch reads TMIGRILLTVVVIFRILIVAIVG. Over 43-75 the chain is Extracellular; the sequence is ETVYDDEQTMFVCNTLQPGCNQACYDRAFPISH. A helical membrane pass occupies residues 76–98; sequence IRYWVFQIIMVCTPSLCFITYSV. Topologically, residues 99–197 are cytoplasmic; that stretch reads HQSAKQRERR…KLRRQEGISR (99 aa). The interval 120-141 is disordered; that stretch reads PAESIGGPGGTGGGGSGGSKRE. Residues 125–137 are compositionally biased toward gly residues; that stretch reads GGPGGTGGGGSGG. Residues 198 to 220 form a helical membrane-spanning segment; it reads FYIIQVVFRNALEIGFLVGQYFL. Over 221–252 the chain is Extracellular; that stretch reads YGFSVPGLYECNRYPCIKEVECYVSRPTEKTV. A helical transmembrane segment spans residues 253-275; that stretch reads FLVFMFAVSGICVVLNLAELNHL. The Cytoplasmic portion of the chain corresponds to 276 to 321; sequence GWRKIKLAVRGAQAKRKSVYEIRNKDLPRVSVPNFGRTQSSDSAYV.

Belongs to the connexin family. Delta-type subfamily. In terms of assembly, a connexon is composed of a hexamer of connexins. As to expression, highly expressed in neurons.

It is found in the cell membrane. It localises to the cell junction. Its subcellular location is the gap junction. One gap junction consists of a cluster of closely packed pairs of transmembrane channels, the connexons, through which materials of low MW diffuse from one cell to a neighboring cell. This Mus musculus (Mouse) protein is Gap junction delta-2 protein (Gjd2).